The primary structure comprises 349 residues: UDP-N-acetylenolpyruvoylglucosamine reductase (349 aa).

An FAD-binding PCMH-type domain is found at 17-187 (VNESADLIIQ…TAITLRLNKQ (171 aa)). Arginine 163 is a catalytic residue. Serine 233 acts as the Proton donor in catalysis. Residue glutamate 328 is part of the active site.

It belongs to the MurB family. The cofactor is FAD.

The protein localises to the cytoplasm. The catalysed reaction is UDP-N-acetyl-alpha-D-muramate + NADP(+) = UDP-N-acetyl-3-O-(1-carboxyvinyl)-alpha-D-glucosamine + NADPH + H(+). It participates in cell wall biogenesis; peptidoglycan biosynthesis. In terms of biological role, cell wall formation. In Aliivibrio fischeri (strain ATCC 700601 / ES114) (Vibrio fischeri), this protein is UDP-N-acetylenolpyruvoylglucosamine reductase.